Here is a 291-residue protein sequence, read N- to C-terminus: Sulfotransferase 1A1 (291 aa).

Residue 44–49 (KSGTNW) participates in 3'-phosphoadenylyl sulfate binding. A substrate-binding site is contributed by 102–104 (KTH). H104 acts as the Proton acceptor in catalysis. 3'-phosphoadenylyl sulfate contacts are provided by residues R126, S134, Y189, 223 to 228 (TSFKKM), and 251 to 255 (FMRKG). A Phosphoserine modification is found at S134.

Belongs to the sulfotransferase 1 family. Homodimer. In terms of tissue distribution, expressed in brain, colon, liver, and small intestine of mice colonized with B.ovatus and L.plantarum.

The protein resides in the cytoplasm. It carries out the reaction a phenol + 3'-phosphoadenylyl sulfate = an aryl sulfate + adenosine 3',5'-bisphosphate + H(+). The catalysed reaction is 17beta-estradiol + 3'-phosphoadenylyl sulfate = 17beta-estradiol 3-sulfate + adenosine 3',5'-bisphosphate + H(+). It catalyses the reaction 4-ethylphenol + 3'-phosphoadenylyl sulfate = 4-ethylphenyl sulfate + adenosine 3',5'-bisphosphate + H(+). The enzyme catalyses 4-nitrophenol + 3'-phosphoadenylyl sulfate = 4-nitrophenyl sulfate + adenosine 3',5'-bisphosphate. It carries out the reaction dopamine + 3'-phosphoadenylyl sulfate = dopamine 3-O-sulfate + adenosine 3',5'-bisphosphate + H(+). The catalysed reaction is dopamine + 3'-phosphoadenylyl sulfate = dopamine 4-O-sulfate + adenosine 3',5'-bisphosphate + H(+). It catalyses the reaction 3,3',5-triiodo-L-thyronine + 3'-phosphoadenylyl sulfate = 3,3',5-triiodo-L-thyronine sulfate + adenosine 3',5'-bisphosphate + H(+). The enzyme catalyses 3,3',5'-triiodo-L-thyronine + 3'-phosphoadenylyl sulfate = 3,3',5'-triiodo-L-thyronine sulfate + adenosine 3',5'-bisphosphate + H(+). It carries out the reaction 3,3'-diiodo-L-thyronine + 3'-phosphoadenylyl sulfate = 3,3'-diiodo-L-thyronine sulfate + adenosine 3',5'-bisphosphate + H(+). The catalysed reaction is L-thyroxine + 3'-phosphoadenylyl sulfate = L-thyroxine sulfate + adenosine 3',5'-bisphosphate + H(+). Its function is as follows. Sulfotransferase that utilizes 3'-phospho-5'-adenylyl sulfate (PAPS) as sulfonate donor to catalyze the sulfate conjugation of a wide variety of acceptor molecules bearing a hydroxyl or an amine group. Sulfonation increases the water solubility of most compounds, and therefore their renal excretion, but it can also result in bioactivation to form active metabolites. Displays broad substrate specificity for small phenolic compounds. Plays an important role in the sulfonation of endogenous molecules such as steroid hormones. Mediates also the metabolic activation of carcinogenic N-hydroxyarylamines leading to highly reactive intermediates capable of forming DNA adducts, potentially resulting in mutagenesis. May play a role in gut microbiota-host metabolic interaction. O-sulfonates 4-ethylphenol (4-EP), a dietary tyrosine-derived metabolite produced by gut bacteria. The product 4-EPS crosses the blood-brain barrier and may negatively regulate oligodendrocyte maturation and myelination, affecting the functional connectivity of different brain regions associated with the limbic system. Catalyzes the sulfate conjugation of dopamine. Catalyzes the sulfation of T4 (L-thyroxine/3,5,3',5'-tetraiodothyronine), T3 (3,5,3'-triiodothyronine), rT3 (3,3',5'-triiodothyronine) and 3,3'-T2 (3,3'-diiodothyronine), with a substrate preference of 3,3'-T2 &gt; rT3 &gt; T3 &gt; T4. The protein is Sulfotransferase 1A1 (Sult1a1) of Mus musculus (Mouse).